We begin with the raw amino-acid sequence, 286 residues long: uncharacterized protein (286 aa).

In terms of domain architecture, Integrase catalytic spans 1–146 (MSRYKKDNDG…KPVDVERGDF (146 aa)). Over residues 252–263 (RKVKAKKGKKDK) the composition is skewed to basic residues. The disordered stretch occupies residues 252–286 (RKVKAKKGKKDKKLKESKKSDDTSTGASTGSSIAM). Over residues 264–273 (KLKESKKSDD) the composition is skewed to basic and acidic residues. A compositionally biased stretch (low complexity) spans 274-286 (TSTGASTGSSIAM).

This is an uncharacterized protein from Caenorhabditis elegans.